The sequence spans 413 residues: Amino acid transporter AVT3B (413 aa).

At methionine 1–lysine 27 the chain is on the cytoplasmic side. A helical membrane pass occupies residues threonine 28–phenylalanine 48. Topologically, residues lysine 49–leucine 54 are vacuolar. A helical transmembrane segment spans residues methionine 55–valine 75. Topologically, residues histidine 76 to phenylalanine 103 are cytoplasmic. The chain crosses the membrane as a helical span at residues valine 104–isoleucine 124. The Vacuolar segment spans residues glycine 125–histidine 145. Residues leucine 146–leucine 166 traverse the membrane as a helical segment. Residues asparagine 167–histidine 174 lie on the Cytoplasmic side of the membrane. The helical transmembrane segment at leucine 175–valine 195 threads the bilayer. The Vacuolar segment spans residues glutamate 196–glutamine 207. A helical transmembrane segment spans residues valine 208–phenylalanine 228. Over glutamate 229–lysine 249 the chain is Cytoplasmic. Residues valine 250 to tyrosine 270 traverse the membrane as a helical segment. At methionine 271–glycine 288 the chain is on the vacuolar side. A helical transmembrane segment spans residues valine 289 to methionine 309. Topologically, residues methionine 310–arginine 331 are cytoplasmic. The chain crosses the membrane as a helical span at residues tryptophan 332–leucine 352. At serine 353–valine 355 the chain is on the vacuolar side. Residues glycine 356–phenylalanine 376 form a helical membrane-spanning segment. The Cytoplasmic portion of the chain corresponds to lysine 377–glycine 390. A helical transmembrane segment spans residues isoleucine 391–phenylalanine 411. At glutamine 412–glutamate 413 the chain is on the vacuolar side.

The protein belongs to the amino acid/polyamine transporter 2 family. Amino acid/auxin permease (AAAP) (TC 2.A.18.8) subfamily. Ubiquitous.

It is found in the vacuole membrane. In terms of biological role, translocates preferentially neutral amino acids from the vacuole to the cytoplasm. This is Amino acid transporter AVT3B from Arabidopsis thaliana (Mouse-ear cress).